Consider the following 736-residue polypeptide: Neprilysin-2 (736 aa).

At 1-19 (MRPDEEDGTTKSPGSRWTR) the chain is on the cytoplasmic side. Residues 20–40 (IWAIIALILLILFLLVLGAAI) form a helical; Signal-anchor for type II membrane protein membrane-spanning segment. Residues 41–736 (YFYINYKDSS…MNPREKCRVW (696 aa)) lie on the Extracellular side of the membrane. In terms of domain architecture, Peptidase M13 spans 52-736 (VCLSPGCIKT…MNPREKCRVW (685 aa)). Intrachain disulfides connect cysteine 53–cysteine 58, cysteine 76–cysteine 721, cysteine 84–cysteine 681, cysteine 142–cysteine 399, and cysteine 608–cysteine 733. Positions 103–123 (FENLGQDLEFALKELLDENDE) form a coiled coil. Zn(2+) is bound at residue histidine 571. Residue glutamate 572 is part of the active site. The Zn(2+) site is built by histidine 575 and glutamate 633. The active-site Proton donor is aspartate 637.

This sequence belongs to the peptidase M13 family. Zn(2+) serves as cofactor. As to expression, expressed in muscle cells, GLR cells, SMB motor neurons and AIM interneurons.

It localises to the membrane. In terms of biological role, required for olfactory plasticity, which is the change from positive chemotaxis to dispersal after prolonged exposure to an odorant. Thought to antagonise snet-1 by degrading excess snet-1 peptides and thus enabling olfactory plasticity. This is Neprilysin-2 from Caenorhabditis elegans.